We begin with the raw amino-acid sequence, 1037 residues long: Serine/threonine-protein kinase ULK2 (1037 aa).

The 263-residue stretch at 9–271 (YCKRDLVGHG…FEAFFSHPFL (263 aa)) folds into the Protein kinase domain. ATP contacts are provided by residues 15-23 (VGHGAFAVV) and lysine 39. Aspartate 131 functions as the Proton acceptor in the catalytic mechanism. Positions 319 to 350 (ENLSSPPLGPPNYLQVSKDSASNSSKNSSCDT) are disordered. Positions 335–348 (SKDSASNSSKNSSC) are enriched in low complexity. A Phosphoserine modification is found at serine 430. Disordered regions lie at residues 452–480 (CSPV…PSPL), 494–515 (GHPQ…PQTQ), 540–594 (QKLR…KTPL), and 626–697 (HGPA…NTER). Composition is skewed to polar residues over residues 506-515 (SSGSPVPQTQ) and 571-585 (LGTS…SPRN). Positions 632 to 643 (QSKDGNDPRECS) are enriched in basic and acidic residues. Residues 658-678 (QQQSKAVFGRSVSTGKLSEQQ) show a composition bias toward polar residues. Residues serine 772 and serine 781 each carry the phosphoserine modification. The CTD-like region stretch occupies residues 813–1037 (ELPEETLMER…SALCCSTATV (225 aa)).

Belongs to the protein kinase superfamily. Ser/Thr protein kinase family. APG1/unc-51/ULK1 subfamily. As to quaternary structure, component of a complex consisting of ATG13/KIAA0652, ULK1 and RB1CC1/FIP200. Interacts (via C-terminus) with ATG13/KIAA0652. Associates with the mammalian target of rapamycin complex 1 (mTORC1) through an interaction with RPTOR. Interacts with SYNGAP1. Autophosphorylated. In response to nutrient limitation, probably phosphorylated and activated by AMPK, leading to activate autophagy. Widely expressed.

It is found in the cytoplasmic vesicle membrane. The catalysed reaction is L-seryl-[protein] + ATP = O-phospho-L-seryl-[protein] + ADP + H(+). It carries out the reaction L-threonyl-[protein] + ATP = O-phospho-L-threonyl-[protein] + ADP + H(+). Its function is as follows. Serine/threonine-protein kinase involved in autophagy in response to starvation. Acts upstream of phosphatidylinositol 3-kinase PIK3C3 to regulate the formation of autophagophores, the precursors of autophagosomes. Part of regulatory feedback loops in autophagy: acts both as a downstream effector and a negative regulator of mammalian target of rapamycin complex 1 (mTORC1) via interaction with RPTOR. Activated via phosphorylation by AMPK, also acts as a negative regulator of AMPK through phosphorylation of the AMPK subunits PRKAA1, PRKAB2 and PRKAG1. May phosphorylate ATG13/KIAA0652, FRS2, FRS3 and RPTOR; however such data need additional evidences. Not involved in ammonia-induced autophagy or in autophagic response of cerebellar granule neurons (CGN) to low potassium concentration. Plays a role early in neuronal differentiation and is required for granule cell axon formation: may govern axon formation via Ras-like GTPase signaling and through regulation of the Rab5-mediated endocytic pathways within developing axons. The polypeptide is Serine/threonine-protein kinase ULK2 (Ulk2) (Mus musculus (Mouse)).